We begin with the raw amino-acid sequence, 356 residues long: 7,8-didemethyl-8-hydroxy-5-deazariboflavin synthase (356 aa).

One can recognise a Radical SAM core domain in the interval 40 to 280 (ITYSKNVFIP…KDISIQVPPN (241 aa)). Residues cysteine 54, cysteine 58, and cysteine 61 each coordinate [4Fe-4S] cluster.

The protein belongs to the radical SAM superfamily. CofG family. In terms of assembly, consists of two subunits, CofG and CofH. [4Fe-4S] cluster is required as a cofactor.

It carries out the reaction 5-amino-5-(4-hydroxybenzyl)-6-(D-ribitylimino)-5,6-dihydrouracil + S-adenosyl-L-methionine = 7,8-didemethyl-8-hydroxy-5-deazariboflavin + 5'-deoxyadenosine + L-methionine + NH4(+) + H(+). Its pathway is cofactor biosynthesis; coenzyme F0 biosynthesis. In terms of biological role, catalyzes the radical-mediated synthesis of 7,8-didemethyl-8-hydroxy-5-deazariboflavin from 5-amino-5-(4-hydroxybenzyl)-6-(D-ribitylimino)-5,6-dihydrouracil. The sequence is that of 7,8-didemethyl-8-hydroxy-5-deazariboflavin synthase from Methanococcus aeolicus (strain ATCC BAA-1280 / DSM 17508 / OCM 812 / Nankai-3).